We begin with the raw amino-acid sequence, 211 residues long: MNDDFIAAEELLQRGAAALSFPVNQEVIEKLMHYLQLLAKWNRVHNLTAIREPQQQVIVHLLDSLVVAPFLPPAQTIADIGSGAGLPGIVLAIVCPQQQFFLVESNTKKSVFLREAVRQLALENVKVVAMRAEQWRPEAKLNVLISRAVSDINSFLMWTAALGDENSRWLLMKAHDDEVCTQKDFYVENVLPLTVPLLDAARVLFVVKKKS.

S-adenosyl-L-methionine contacts are provided by residues G81, L86, 132–133 (AE), and R147.

The protein belongs to the methyltransferase superfamily. RNA methyltransferase RsmG family.

Its subcellular location is the cytoplasm. It catalyses the reaction guanosine(527) in 16S rRNA + S-adenosyl-L-methionine = N(7)-methylguanosine(527) in 16S rRNA + S-adenosyl-L-homocysteine. Its function is as follows. Specifically methylates the N7 position of guanine in position 527 of 16S rRNA. The chain is Ribosomal RNA small subunit methyltransferase G from Dichelobacter nodosus (strain VCS1703A).